We begin with the raw amino-acid sequence, 206 residues long: Large ribosomal subunit protein uL4 (206 aa).

Residues 51–96 (LTRAEVKHSTKKPFRQKGTGNARAGMTSTPNRRGGGRAFPNKPDEN) form a disordered region.

Belongs to the universal ribosomal protein uL4 family. As to quaternary structure, part of the 50S ribosomal subunit.

In terms of biological role, one of the primary rRNA binding proteins, this protein initially binds near the 5'-end of the 23S rRNA. It is important during the early stages of 50S assembly. It makes multiple contacts with different domains of the 23S rRNA in the assembled 50S subunit and ribosome. Its function is as follows. Forms part of the polypeptide exit tunnel. The polypeptide is Large ribosomal subunit protein uL4 (Chromobacterium violaceum (strain ATCC 12472 / DSM 30191 / JCM 1249 / CCUG 213 / NBRC 12614 / NCIMB 9131 / NCTC 9757 / MK)).